We begin with the raw amino-acid sequence, 273 residues long: Ribosomal protein L11 methyltransferase (273 aa).

Positions 112, 133, 155, and 203 each coordinate S-adenosyl-L-methionine.

This sequence belongs to the methyltransferase superfamily. PrmA family.

The protein resides in the cytoplasm. The catalysed reaction is L-lysyl-[protein] + 3 S-adenosyl-L-methionine = N(6),N(6),N(6)-trimethyl-L-lysyl-[protein] + 3 S-adenosyl-L-homocysteine + 3 H(+). Methylates ribosomal protein L11. The chain is Ribosomal protein L11 methyltransferase from Deinococcus radiodurans (strain ATCC 13939 / DSM 20539 / JCM 16871 / CCUG 27074 / LMG 4051 / NBRC 15346 / NCIMB 9279 / VKM B-1422 / R1).